Here is a 107-residue protein sequence, read N- to C-terminus: V-type proton ATPase subunit G (107 aa).

The protein belongs to the V-ATPase G subunit family. In terms of assembly, V-ATPase is a heteromultimeric enzyme composed of a peripheral catalytic V1 complex (components A to H) attached to an integral membrane V0 proton pore complex (components: a, c, c', c'' and d).

Catalytic subunit of the peripheral V1 complex of vacuolar ATPase (V-ATPase). V-ATPase is responsible for acidifying a variety of intracellular compartments in eukaryotic cells. The sequence is that of V-type proton ATPase subunit G (atp6v1g) from Dictyostelium discoideum (Social amoeba).